The chain runs to 488 residues: Glutamyl-tRNA(Gln) amidotransferase subunit A (488 aa).

Residues lysine 77 and serine 152 each act as charge relay system in the active site. Residue serine 176 is the Acyl-ester intermediate of the active site.

The protein belongs to the amidase family. GatA subfamily. As to quaternary structure, heterotrimer of A, B and C subunits.

The catalysed reaction is L-glutamyl-tRNA(Gln) + L-glutamine + ATP + H2O = L-glutaminyl-tRNA(Gln) + L-glutamate + ADP + phosphate + H(+). Its function is as follows. Allows the formation of correctly charged Gln-tRNA(Gln) through the transamidation of misacylated Glu-tRNA(Gln) in organisms which lack glutaminyl-tRNA synthetase. The reaction takes place in the presence of glutamine and ATP through an activated gamma-phospho-Glu-tRNA(Gln). This chain is Glutamyl-tRNA(Gln) amidotransferase subunit A, found in Streptococcus agalactiae serotype Ia (strain ATCC 27591 / A909 / CDC SS700).